The following is a 330-amino-acid chain: Taste receptor type 2 member 117 (330 aa).

Residues 1-16 (MKHFWKILSVISQSTL) are Extracellular-facing. The helical transmembrane segment at 17-37 (SVILIVELVIGIIGNGFMVLV) threads the bilayer. Residues 38–53 (HCMDWVKKKKMSLVNQ) lie on the Cytoplasmic side of the membrane. A helical membrane pass occupies residues 54 to 74 (ILTALSISRIFQLCLLFISLV). The Extracellular segment spans residues 75–95 (INFSYTDLTTSSRMIQVMYNA). Asparagine 76 carries an N-linked (GlcNAc...) asparagine glycan. The chain crosses the membrane as a helical span at residues 96–116 (WILANHFSIWIATCLTVLYFL). Topologically, residues 117-135 (KIANFSNSFFLYLKWRVEK) are cytoplasmic. A helical transmembrane segment spans residues 136 to 156 (VVSVTLLVSLLLLILNILLTN). The Extracellular segment spans residues 157 to 190 (LETDMWTNEYQRNISCSFSSHYYAKCHRQVLRLH). N-linked (GlcNAc...) asparagine glycosylation is present at asparagine 169. Residues 191–211 (IIFLSVPVVLSLSTFLLLIFS) traverse the membrane as a helical segment. The Cytoplasmic segment spans residues 212-239 (LWTHHKRMQQHVQGGRDARTTAHFKALQ). Residues 240–260 (TVIAFFLLYSIFILSVLIQIW) form a helical membrane-spanning segment. The Extracellular segment spans residues 261–269 (KYELLKKNL). The helical transmembrane segment at 270–290 (FVVFCEVVYIAFPTFHSYILI) threads the bilayer. The Cytoplasmic portion of the chain corresponds to 291–330 (VGDMKLRQACLPLCIIAAEIQTTLCRNFRSLKYFRLCCIF).

Belongs to the G-protein coupled receptor T2R family.

It is found in the membrane. In terms of biological role, putative taste receptor which may play a role in the perception of bitterness. In Mus musculus (Mouse), this protein is Taste receptor type 2 member 117.